Reading from the N-terminus, the 185-residue chain is Ribosome-recycling factor (185 aa).

The disordered stretch occupies residues 137–159 (EDLKADEKAKDISEDDRKRMEDE).

This sequence belongs to the RRF family.

The protein resides in the cytoplasm. In terms of biological role, responsible for the release of ribosomes from messenger RNA at the termination of protein biosynthesis. May increase the efficiency of translation by recycling ribosomes from one round of translation to another. This Erythrobacter litoralis (strain HTCC2594) protein is Ribosome-recycling factor.